A 62-amino-acid chain; its full sequence is Negative regulatory protein YxlE (62 aa).

Transmembrane regions (helical) follow at residues 7-27 (MILPLIVLQLALAVFALISCI) and 37-57 (WMWAAIIVCINIIGPILFFTV).

It is found in the cell membrane. Its function is as follows. Together with YxlD is important for negative regulation of sigma Y activity. The protein is Negative regulatory protein YxlE (yxlE) of Bacillus subtilis (strain 168).